The chain runs to 550 residues: DNA-directed RNA polymerase subunit alpha (550 aa).

Residues 1–333 (MTIYPNLKKI…QENNLFRSEK (333 aa)) form an alpha N-terminal domain (alpha-NTD) region. An insert region spans residues 185–258 (TTLKKRNILL…TSLGHDTVSN (74 aa)). Positions 378 to 550 (FLNQSLGQNK…SLTFEYARKF (173 aa)) are alpha C-terminal domain (alpha-CTD).

This sequence belongs to the RNA polymerase alpha chain family. As to quaternary structure, in plastids the minimal PEP RNA polymerase catalytic core is composed of four subunits: alpha, beta, beta', and beta''. When a (nuclear-encoded) sigma factor is associated with the core the holoenzyme is formed, which can initiate transcription.

It is found in the plastid. The protein localises to the chloroplast. It catalyses the reaction RNA(n) + a ribonucleoside 5'-triphosphate = RNA(n+1) + diphosphate. Functionally, DNA-dependent RNA polymerase catalyzes the transcription of DNA into RNA using the four ribonucleoside triphosphates as substrates. This is DNA-directed RNA polymerase subunit alpha (rpoA) from Chlamydomonas reinhardtii (Chlamydomonas smithii).